The sequence spans 638 residues: Neuroendocrine convertase 2 (638 aa).

An N-terminal signal peptide occupies residues 1–25; sequence MKGGCVSQWKAAAGLLFCVTVFASA. Positions 26–109 are excised as a propeptide; sequence ERPVFTNHFL…QQEGFDRKKR (84 aa). Positions 129 to 453 constitute a Peptidase S8 domain; that stretch reads QWYLINTGQA…YGVLDAGAMV (325 aa). Residues D167 and H208 each act as charge relay system in the active site. Cystine bridges form between C225-C376 and C317-C347. Residue N375 is glycosylated (N-linked (GlcNAc...) asparagine). Residue S384 is the Charge relay system of the active site. The P/Homo B domain occupies 461–597; the sequence is TVPERFHCVG…TLMLHGSQSA (137 aa). An intrachain disulfide couples C468 to C494. Residues N514 and N524 are each glycosylated (N-linked (GlcNAc...) asparagine).

Belongs to the peptidase S8 family. Furin subfamily.

Its subcellular location is the cytoplasmic vesicle. The protein resides in the secretory vesicle. The protein localises to the secreted. It carries out the reaction Release of protein hormones and neuropeptides from their precursors, generally by hydrolysis of -Lys-Arg-|- bonds.. Its function is as follows. Serine endopeptidase which is involved in the processing of hormone and other protein precursors at sites comprised of pairs of basic amino acid residues. Responsible for the release of glucagon from proglucagon in pancreatic A cells. The polypeptide is Neuroendocrine convertase 2 (PCSK2) (Sus scrofa (Pig)).